The primary structure comprises 329 residues: Phospholipid scramblase 4 (329 aa).

Residues 1–51 (MSGVVPTAPEQPAGEMENQTKPPDPRPDAPPEYNSHFLPGPPGTAVPPPTG) are disordered. A proline-rich domain (PRD) region spans residues 1–98 (MSGVVPTAPE…PMPNQSVPIT (98 aa)). Over 1 to 303 (MSGVVPTAPE…IHFPLDLDVK (303 aa)) the chain is Cytoplasmic. The SH3-binding 1 motif lies at 18–25 (NQTKPPDP). The PPxY motif signature appears at 30 to 33 (PPEY). Positions 39-51 (PGPPGTAVPPPTG) are enriched in pro residues. Positions 41 to 49 (PPGTAVPPP) match the SH3-binding 2 motif. A phosphotyrosine; by ABL mark is found at tyrosine 83 and tyrosine 88. Positions 98-106 (TWMPGPTPM) match the SH3-binding 3 motif. S-palmitoyl cysteine attachment occurs at residues cysteine 197, cysteine 198, cysteine 199, cysteine 201, and cysteine 202. Positions 271-283 (NIGSIIRKWNGLL) match the Nuclear localization signal motif. The chain crosses the membrane as a helical span at residues 304–320 (MKAMIFGACFLIDFMYF). Over 321-329 (ERSPPQRSR) the chain is Extracellular.

This sequence belongs to the phospholipid scramblase family. Interacts with PDCD6. Interacts with KPNA2; this interaction mediates the nucleus import of PLSCR4. Requires Ca(2+) as cofactor. Mg(2+) serves as cofactor. It depends on Zn(2+) as a cofactor. Expressed in heart, brain, placenta, lung, liver, kidney, pancreas, spleen, thymus, prostate, testis, uterus, small intestine and colon. Not detected in peripheral blood lymphocytes.

It is found in the cell membrane. The protein resides in the nucleus. The catalysed reaction is a 1,2-diacyl-sn-glycero-3-phosphocholine(in) = a 1,2-diacyl-sn-glycero-3-phosphocholine(out). The enzyme catalyses a 1,2-diacyl-sn-glycero-3-phospho-L-serine(in) = a 1,2-diacyl-sn-glycero-3-phospho-L-serine(out). In terms of biological role, catalyzes metal ion-induced ATP-independent rapid bidirectional and non-specific movement of phospholipids (lipid scrambling or lipid flip-flop) between the inner and outer leaflet of the plasma membrane and participates in the redistribution of phospholipids between membrane leaflets. Metal ions bind to the calcium-binding site and induce conformation change in the protein. Has a greater affi nity for Ca(2+) than Mg(2+) and Zn(2+). This is Phospholipid scramblase 4 from Homo sapiens (Human).